The following is a 533-amino-acid chain: Lymphocyte cytosolic protein 2 (533 aa).

The SAM domain occupies 15–81 (WDPDSLADYF…INKNEERRSI (67 aa)). Tyr-23 carries the post-translational modification Phosphotyrosine. Positions 78 to 417 (RRSIFTRKPQ…PPSPAEEENS (340 aa)) are disordered. Acidic residues predominate over residues 108-155 (FEEDDYESPNDDQDGEDDGDYESPNEEEEAPVEDDADYEPPPSNDEEA). The segment covering 184 to 213 (QQPPVPPQRPMAALPPPPAGRNHSPLPPPQ) has biased composition (pro residues). Phosphoserine is present on Ser-207. 2 stretches are compositionally biased toward polar residues: residues 337 to 350 (MSSN…TKPS) and 365 to 376 (SESNSSFPQSAS). Residues Ser-376 and Ser-410 each carry the phosphoserine modification. The segment covering 400 to 411 (LPLPNKPRPPSP) has biased composition (pro residues). In terms of domain architecture, SH2 spans 422-530 (WYVSYITRPE…RYQCTLTHAA (109 aa)).

Interacts with SLA. Interacts with CBLB. Interacts with GRB2. Interacts with SHB. Interacts with PRAM1. Interacts (via SH2 domain) with CD6 (via tyrosine phosphorylated C-terminus). Interacts with FYB1 and the phosphorylated form of FYB2. Interacts with 14-3-3 adapter/YWHAZ; this phosphorylation leads to YWHAZ proteolytic degradation. Interacts with VAV1; this interaction plays a role in TCR-mediated cytokine production. Interacts with AGER; this interaction plays an important role in AGER-mediated pro-inflammatory responses and cytokine release. Phosphorylated after T-cell receptor activation by ZAP70, ITK and TXK, which leads to the up-regulation of Th1 preferred cytokine IL-2. SYK-dependent phosphorylation is required for recruitment of PI3K signaling components. In terms of tissue distribution, highly expressed in spleen, thymus and peripheral blood leukocytes. Highly expressed also in T-cell and monocytic cell lines, expressed at lower level in B-cell lines. Not detected in fibroblast or neuroblastoma cell lines.

It localises to the cytoplasm. Adapter protein primarily involved in signaling pathways within T-cells, as well as other immune cells such as platelets, mast cells, and natural killer (NK) cells. Plays a crucial role for transducing signal from the T-cell receptor (TCR) after antigen recognition leading to T-cell activation. Mechanistically, once phosphorylated by the kinase ZAP70, mediates interactions with the guanine-nucleotide exchange factor VAV1, the adapter protein NCK and the kinase ITK. In turn, stimulates the activation of PKC-theta/PRKCQ and NF-kappa-B transcriptional activity in response to CD3 and CD28 costimulation. Also plays an essential role in AGER-induced signaling pathways including p38 MAPK and ERK1/2 activation leading to cytokine release and pro-inflammatory responses. The protein is Lymphocyte cytosolic protein 2 (LCP2) of Homo sapiens (Human).